Reading from the N-terminus, the 305-residue chain is Uridylate-specific endoribonuclease D (305 aa).

The N-terminal stretch at 1–17 (MKVYFVFLCLLPSLISG) is a signal peptide. Residues 33–305 (SNAEIQSLAE…RYVASSYPNI (273 aa)) form the EndoU domain. Active-site residues include histidine 182, histidine 197, and lysine 240. A glycan (N-linked (GlcNAc...) asparagine) is linked at asparagine 288.

The protein belongs to the ENDOU family. As to quaternary structure, monomer. Mn(2+) serves as cofactor.

It is found in the secreted. The catalysed reaction is ribonucleotidyl-uridine-RNA = a 5'-end dephospho-uridine-RNA + a 3'-end 2',3'-cyclophospho-ribonucleotide-RNA. Its function is as follows. Endoribonuclease that cleaves single-stranded RNAs at 5' of uridylates and releases a product with a 2',3'-cyclic phosphate at the 3'-end. The protein is Uridylate-specific endoribonuclease D (endou-d) of Xenopus laevis (African clawed frog).